A 763-amino-acid chain; its full sequence is Endothelin-converting enzyme 2 (763 aa).

Residues 1–60 (MNVALHELGGGGSMVEYKRAKLRDEESPEITVEGRATRDSLEVGFQKRTRQLFGSHTQLE) lie on the Cytoplasmic side of the membrane. Residue Ser-27 is modified to Phosphoserine. Residues 61–81 (LVLAGLILVLAALLLGCLVAL) form a helical; Signal-anchor for type II membrane protein membrane-spanning segment. At 82–763 (WVHRDPAHST…MNPGQLCEVW (682 aa)) the chain is on the lumenal side. Residues 91-763 (TCVTEACIRV…MNPGQLCEVW (673 aa)) enclose the Peptidase M13 domain. 5 disulfides stabilise this stretch: Cys-92–Cys-97, Cys-115–Cys-748, Cys-123–Cys-708, Cys-179–Cys-428, and Cys-637–Cys-760. N-linked (GlcNAc...) asparagine glycosylation is found at Asn-159, Asn-163, Asn-204, Asn-264, Asn-309, Asn-376, and Asn-532. His-600 is a Zn(2+) binding site. Glu-601 is a catalytic residue. His-604 lines the Zn(2+) pocket. Residues Asn-625 and Asn-633 are each glycosylated (N-linked (GlcNAc...) asparagine). Glu-660 is a Zn(2+) binding site. Residue Asp-664 is the Proton donor of the active site.

The protein belongs to the peptidase M13 family. Requires Zn(2+) as cofactor.

Its subcellular location is the golgi apparatus membrane. The protein resides in the cytoplasmic vesicle. It is found in the secretory vesicle membrane. It carries out the reaction Hydrolysis of the 21-Trp-|-Val-22 bond in big endothelin to form endothelin 1.. Its function is as follows. Converts big endothelin-1 to endothelin-1. Also involved in the processing of various neuroendocrine peptides, including neurotensin, angiotensin I, substance P, proenkephalin-derived peptides, and prodynorphin-derived peptides. May play a role in amyloid-beta processing. The protein is Endothelin-converting enzyme 2 of Mus musculus (Mouse).